Here is a 222-residue protein sequence, read N- to C-terminus: V-type ATP synthase subunit D (222 aa).

Belongs to the V-ATPase D subunit family.

Functionally, produces ATP from ADP in the presence of a proton gradient across the membrane. This Clostridioides difficile (strain 630) (Peptoclostridium difficile) protein is V-type ATP synthase subunit D.